The chain runs to 90 residues: uncharacterized protein (90 aa).

The interval 1-26 is disordered; sequence MFKRSVSRLFCAPAPAPAPRKQPGGR. A coiled-coil region spans residues 33 to 66; that stretch reads NLNQSVKKQLNHLEVLERIKKQRKEQKNNRNQVD.

This is an uncharacterized protein from Dictyostelium discoideum (Social amoeba).